A 184-amino-acid polypeptide reads, in one-letter code: Ribosome maturation factor RimM (184 aa).

Positions 112–184 constitute a PRC barrel domain; that stretch reads TDSYYWIDLI…SNKTISLDWQ (73 aa).

It belongs to the RimM family. As to quaternary structure, binds ribosomal protein uS19.

It localises to the cytoplasm. Functionally, an accessory protein needed during the final step in the assembly of 30S ribosomal subunit, possibly for assembly of the head region. Essential for efficient processing of 16S rRNA. May be needed both before and after RbfA during the maturation of 16S rRNA. It has affinity for free ribosomal 30S subunits but not for 70S ribosomes. The chain is Ribosome maturation factor RimM from Polynucleobacter necessarius subsp. necessarius (strain STIR1).